We begin with the raw amino-acid sequence, 75 residues long: Translational regulator CsrA (75 aa).

The protein belongs to the CsrA/RsmA family. In terms of assembly, homodimer; the beta-strands of each monomer intercalate to form a hydrophobic core, while the alpha-helices form wings that extend away from the core.

It is found in the cytoplasm. Functionally, a translational regulator that binds mRNA to regulate translation initiation and/or mRNA stability. Usually binds in the 5'-UTR at or near the Shine-Dalgarno sequence preventing ribosome-binding, thus repressing translation. Its main target seems to be the major flagellin gene, while its function is anatagonized by FliW. The chain is Translational regulator CsrA from Treponema denticola (strain ATCC 35405 / DSM 14222 / CIP 103919 / JCM 8153 / KCTC 15104).